Reading from the N-terminus, the 376-residue chain is Putative aryl-alcohol dehydrogenase AAD14 (376 aa).

Tyrosine 76 functions as the Proton donor in the catalytic mechanism. Histidine 151 contributes to the substrate binding site. Position 236–246 (236–246 (DVMGGGRFQSK)) interacts with NADP(+).

This sequence belongs to the aldo/keto reductase family. Aldo/keto reductase 2 subfamily.

The protein is Putative aryl-alcohol dehydrogenase AAD14 (AAD14) of Saccharomyces cerevisiae (strain ATCC 204508 / S288c) (Baker's yeast).